We begin with the raw amino-acid sequence, 502 residues long: Hexokinase-9 (502 aa).

A helical membrane pass occupies residues 5–24 (AALASAAMAAAAVAVVSTVL). Residues 37–488 (RAEAVLLRDL…SGVGAALLAA (452 aa)) form the Hexokinase domain. The interval 92–230 (SGGEKGMFYA…GLDMKVTALV (139 aa)) is hexokinase small subdomain. Positions 106, 107, and 108 each coordinate ADP. D-glucose contacts are provided by T196, K197, N231, and D232. Residues 231-477 (NDTVGTLAAG…PSVMIKHVND (247 aa)) are hexokinase large subdomain. T255 is a binding site for ADP. The D-glucose site is built by N258, E286, and E317. Residue G442 participates in ADP binding.

Belongs to the hexokinase family. Expressed in roots, leaves, flowers, immature seeds, endosperm and seed coat.

Its subcellular location is the plastid. It is found in the chloroplast outer membrane. It carries out the reaction a D-hexose + ATP = a D-hexose 6-phosphate + ADP + H(+). The enzyme catalyses D-fructose + ATP = D-fructose 6-phosphate + ADP + H(+). It catalyses the reaction D-glucose + ATP = D-glucose 6-phosphate + ADP + H(+). The protein operates within carbohydrate metabolism; hexose metabolism. Its pathway is carbohydrate degradation; glycolysis; D-glyceraldehyde 3-phosphate and glycerone phosphate from D-glucose: step 1/4. Its function is as follows. Fructose and glucose phosphorylating enzyme. The sequence is that of Hexokinase-9 (HXK9) from Oryza sativa subsp. japonica (Rice).